The following is a 131-amino-acid chain: D-ribose pyranase (131 aa).

H20 serves as the catalytic Proton donor. Residues D28, H98, and 120 to 122 (YSN) each bind substrate.

Belongs to the RbsD / FucU family. RbsD subfamily. Homodecamer.

Its subcellular location is the cytoplasm. It catalyses the reaction beta-D-ribopyranose = beta-D-ribofuranose. It functions in the pathway carbohydrate metabolism; D-ribose degradation; D-ribose 5-phosphate from beta-D-ribopyranose: step 1/2. In terms of biological role, catalyzes the interconversion of beta-pyran and beta-furan forms of D-ribose. This Lactiplantibacillus plantarum (strain ATCC BAA-793 / NCIMB 8826 / WCFS1) (Lactobacillus plantarum) protein is D-ribose pyranase.